A 967-amino-acid chain; its full sequence is Leucine--tRNA ligase (967 aa).

The 'HIGH' region signature appears at Pro43–His53. A 'KMSKS' region motif is present at residues Lys650 to Ser654. Lys653 serves as a coordination point for ATP.

The protein belongs to the class-I aminoacyl-tRNA synthetase family.

It localises to the cytoplasm. The catalysed reaction is tRNA(Leu) + L-leucine + ATP = L-leucyl-tRNA(Leu) + AMP + diphosphate. The polypeptide is Leucine--tRNA ligase (Thermococcus onnurineus (strain NA1)).